The sequence spans 151 residues: FAD synthase (151 aa).

ATP-binding positions include 21–22 (TF), 26–29 (HPGH), and Asp104.

Belongs to the archaeal FAD synthase family. In terms of assembly, homodimer. Requires a divalent metal cation as cofactor.

The catalysed reaction is FMN + ATP + H(+) = FAD + diphosphate. It functions in the pathway cofactor biosynthesis; FAD biosynthesis; FAD from FMN: step 1/1. Catalyzes the transfer of the AMP portion of ATP to flavin mononucleotide (FMN) to produce flavin adenine dinucleotide (FAD) coenzyme. The protein is FAD synthase of Methanosarcina mazei (strain ATCC BAA-159 / DSM 3647 / Goe1 / Go1 / JCM 11833 / OCM 88) (Methanosarcina frisia).